The chain runs to 368 residues: Meiotic driver wtf23 (368 aa).

The tract at residues 1–98 (MKNKYYPLRS…SSGTADNSST (98 aa)) is disordered. A compositionally biased stretch (basic and acidic residues) spans 11–29 (SMDELSAKNDNEIDLEKGP). 2 stretches are compositionally biased toward polar residues: residues 57–72 (GANN…STTP) and 89–98 (SSGTADNSST). 7 consecutive transmembrane segments (helical) span residues 105–124 (FLSF…YLTY), 139–158 (YFGV…WYFY), 170–192 (IFLA…VISI), 202–221 (MIII…GCVK), 234–256 (STCT…FWTF), 266–283 (VFLL…TMFL), and 328–350 (GIAF…FRGG).

The protein belongs to the WTF family. Homomer. Forms protein aggregates. The two isoforms can interact with each other and with themselves. High sequence similarity is required for their interaction.

The protein localises to the spore membrane. The protein resides in the vacuole membrane. Its subcellular location is the ascus epiplasm. It localises to the cytoplasm. It is found in the endoplasmic reticulum membrane. Promotes unequal transmission of alleles from the parental zygote to progeny spores by acting as poison/antidote system where the poison and antidote proteins are produced from the same locus; the poison component is trans-acting and targets all spores within an ascus whereas the antidote component is spore-specific, leading to poisoning of all progeny that do not inherit the allele. Its function is as follows. Localizes isoform 2 to the vacuole thereby facilitating its degradation. Functionally, forms toxic aggregates that disrupt spore maturation. The sequence is that of Meiotic driver wtf23 from Schizosaccharomyces pombe (strain 972 / ATCC 24843) (Fission yeast).